Here is a 907-residue protein sequence, read N- to C-terminus: MIRELCRGFGRYRRYLGRLRQNLRETQKFFRDIKCSHNHTCPSSPTSGGGAERGPAGDVAETGLQAGQLSCISFPPKEEKYLQQIVDCLPCILILGQDCNVKCQLLNLLLGVQVLPTTKLGSEESCKLRRLRFTYGTQTRVSLALPGQYELVHTLVAHQGNWETIPEEDLEVQENNEDAAHVLAELEVTMHHALLQEVDVVVAPCQGLRPTVDVLGDLVNDFLPVITYALHKDELSERDEQELQEIRKYFSFPVFFFKVPKLGSEITDSSTRRTESERSLLYRQLIDLGYLSSSHWNCGTPGQDTKAQSVLVEQSEKLRHLSTFSHQVLQTRLVDAAKALNLVHCHCLDIFINQAFDMQRDLQITPKRLEYTRKKENELYESLMNIANRKQEEMKDMIVETLNTMKEELLDDAANMEFKDVIVPENGEPVGTREIKCCIRQIQELIISRLNQAVANKLISSVDYLRESFVGTLERCLQSLEKSQDVSVHITSNYLKQILNAAYHVEVTFHSGSSVTRMLWEQIKQIIQRITWVSPPAITLEWKRKVAQEAIESLSASKLAKSICSQFRTRLNSSHEAFAASLRQLEAGHSGRLEKTEDLWLKVRKDHAPRLARLSLESRSLQDVLLHRKPKLGQELGRGQYGVVYLCDNWGGHFPCALKSVVPPDEKHWNDLALEFHYMRSLPKHERLVDLHGSVIDYNYGGGSSIAVLLIMERLHRDLYTGLKAGLTLETRLQIALDVVEGIRFLHSQGLVHRDIKLKNVLLDKQNRAKITDLGFCKPEAMMSGSIVGTPIHMAPELFTGKYDNSVDVYAFGILFWYICSGSVKLPEAFERCASKDHLWNNVRRGARPERLPVFDEECWQLMEACWDGDPLKRPLLGIVQPMLQGIMDRLCKSNSEQPNRGLDDST.

The stretch at 373-409 (RKKENELYESLMNIANRKQEEMKDMIVETLNTMKEEL) forms a coiled coil. The region spanning 630 to 884 (PKLGQELGRG…PLLGIVQPML (255 aa)) is the Protein kinase domain. ATP is bound by residues 636–644 (LGRGQYGVV) and K659. The Proton acceptor role is filled by D755.

It belongs to the protein kinase superfamily. Ser/Thr protein kinase family.

The protein localises to the cytoplasm. The protein resides in the cell membrane. It localises to the apical cell membrane. It is found in the basolateral cell membrane. Its subcellular location is the cell junction. The catalysed reaction is L-seryl-[protein] + ATP = O-phospho-L-seryl-[protein] + ADP + H(+). The enzyme catalyses L-threonyl-[protein] + ATP = O-phospho-L-threonyl-[protein] + ADP + H(+). It carries out the reaction L-tyrosyl-[protein] + ATP = O-phospho-L-tyrosyl-[protein] + ADP + H(+). Its function is as follows. Acts as a positive regulator of ERK phosphorylation downstream of fibroblast growth factor-receptor activation. Involved in the regulation of both caspase-dependent apoptosis and caspase-independent cell death. In the skin, it plays a predominant role in suppressing caspase-dependent apoptosis in response to UV stress in a range of dermal cell types. The sequence is that of Dual serine/threonine and tyrosine protein kinase from Macaca mulatta (Rhesus macaque).